The following is a 123-amino-acid chain: Small ribosomal subunit protein uS12 (123 aa).

Position 89 is a 3-methylthioaspartic acid (Asp-89). Residues 104-123 are disordered; that stretch reads TAGVKDRKQARSKYGAKRPK. Basic residues predominate over residues 113–123; sequence ARSKYGAKRPK.

Belongs to the universal ribosomal protein uS12 family. Part of the 30S ribosomal subunit. Contacts proteins S8 and S17. May interact with IF1 in the 30S initiation complex.

Its function is as follows. With S4 and S5 plays an important role in translational accuracy. In terms of biological role, interacts with and stabilizes bases of the 16S rRNA that are involved in tRNA selection in the A site and with the mRNA backbone. Located at the interface of the 30S and 50S subunits, it traverses the body of the 30S subunit contacting proteins on the other side and probably holding the rRNA structure together. The combined cluster of proteins S8, S12 and S17 appears to hold together the shoulder and platform of the 30S subunit. In Neisseria meningitidis serogroup C (strain 053442), this protein is Small ribosomal subunit protein uS12.